A 115-amino-acid chain; its full sequence is Holo-[acyl-carrier-protein] synthase (115 aa).

Asp8 and Glu50 together coordinate Mg(2+).

It belongs to the P-Pant transferase superfamily. AcpS family. Mg(2+) serves as cofactor.

The protein resides in the cytoplasm. The catalysed reaction is apo-[ACP] + CoA = holo-[ACP] + adenosine 3',5'-bisphosphate + H(+). Transfers the 4'-phosphopantetheine moiety from coenzyme A to a Ser of acyl-carrier-protein. This Cutibacterium acnes (strain DSM 16379 / KPA171202) (Propionibacterium acnes) protein is Holo-[acyl-carrier-protein] synthase.